A 309-amino-acid chain; its full sequence is Probable manganese-dependent inorganic pyrophosphatase (309 aa).

Residues H9, D13, D15, D75, H97, and D149 each coordinate Mn(2+).

Belongs to the PPase class C family. It depends on Mn(2+) as a cofactor.

It localises to the cytoplasm. The enzyme catalyses diphosphate + H2O = 2 phosphate + H(+). The sequence is that of Probable manganese-dependent inorganic pyrophosphatase from Staphylococcus haemolyticus (strain JCSC1435).